We begin with the raw amino-acid sequence, 183 residues long: ESX-1 secretion-associated protein EspH (183 aa).

Acidic residues predominate over residues 1–16 (MVDPPGNDDDHGDLDA). The tract at residues 1–32 (MVDPPGNDDDHGDLDALDFSAAHTNEASPLDA) is disordered.

This Mycobacterium tuberculosis (strain ATCC 25618 / H37Rv) protein is ESX-1 secretion-associated protein EspH.